We begin with the raw amino-acid sequence, 282 residues long: MWADIYHKLVEIYDIKAVKFLLDVLKILIIAFIGIKFADFLIYRFYKLYSKSKIQLPQRKIDTLTSLTKNAVRYIIYFLAGASILKLFNIDMTSLLAVAGIGSLAIGFGAQNLVKDMISGFFIIFEDQFSVGDYVTINGISGTVEEIGLRVTKIRGFSDGLHIIPNGEIKMVTNLTKDSMMAVVNIAFPIDEDVDKIIEGLQEICEEVKKSRDDLIEGPTVLGITDMQDSKLVIMVYAKTQPMQKWAVERDIRYRVKKMFDQKNISFPYPRTTVILSEKKTN.

At 1–23 (MWADIYHKLVEIYDIKAVKFLLD) the chain is on the periplasmic side. Residues 24-46 (VLKILIIAFIGIKFADFLIYRFY) traverse the membrane as a helical segment. Topologically, residues 47 to 66 (KLYSKSKIQLPQRKIDTLTS) are cytoplasmic. The chain crosses the membrane as a helical span at residues 67–87 (LTKNAVRYIIYFLAGASILKL). The Periplasmic portion of the chain corresponds to 88–89 (FN). Residues 90–110 (IDMTSLLAVAGIGSLAIGFGA) form a helical membrane-spanning segment. The Cytoplasmic segment spans residues 111-282 (QNLVKDMISG…TVILSEKKTN (172 aa)).

Belongs to the MscS (TC 1.A.23) family. In terms of assembly, homoheptamer.

It is found in the cell inner membrane. In terms of biological role, mechanosensitive ion channel that participates in the regulation of osmotic pressure changes within the cell, opening in response to stretch forces in the membrane lipid bilayer, without the need for other proteins. Has high selectivity for anions, and may contribute to resistance to hypoosmotic shock. This is Small-conductance mechanosensitive channel from Caldanaerobacter subterraneus subsp. tengcongensis (strain DSM 15242 / JCM 11007 / NBRC 100824 / MB4) (Thermoanaerobacter tengcongensis).